The chain runs to 238 residues: Leucyl/phenylalanyl-tRNA--protein transferase (238 aa).

Belongs to the L/F-transferase family.

It is found in the cytoplasm. It carries out the reaction N-terminal L-lysyl-[protein] + L-leucyl-tRNA(Leu) = N-terminal L-leucyl-L-lysyl-[protein] + tRNA(Leu) + H(+). It catalyses the reaction N-terminal L-arginyl-[protein] + L-leucyl-tRNA(Leu) = N-terminal L-leucyl-L-arginyl-[protein] + tRNA(Leu) + H(+). The enzyme catalyses L-phenylalanyl-tRNA(Phe) + an N-terminal L-alpha-aminoacyl-[protein] = an N-terminal L-phenylalanyl-L-alpha-aminoacyl-[protein] + tRNA(Phe). In terms of biological role, functions in the N-end rule pathway of protein degradation where it conjugates Leu, Phe and, less efficiently, Met from aminoacyl-tRNAs to the N-termini of proteins containing an N-terminal arginine or lysine. In Psychromonas ingrahamii (strain DSM 17664 / CCUG 51855 / 37), this protein is Leucyl/phenylalanyl-tRNA--protein transferase.